We begin with the raw amino-acid sequence, 140 residues long: Transmembrane protein 234 homolog (140 aa).

4 helical membrane passes run I14–I34, W64–L84, E88–A108, and S116–L136.

It belongs to the TMEM234 family.

The protein resides in the membrane. The chain is Transmembrane protein 234 homolog from Anopheles gambiae (African malaria mosquito).